Consider the following 418-residue polypeptide: Vasopressin V1a receptor (418 aa).

Positions 1-43 (MRLSAGPDAGPSGNSSPWWPLATGAGNTSREAEALGEGNGPPR) are disordered. The Extracellular portion of the chain corresponds to 1–52 (MRLSAGPDAGPSGNSSPWWPLATGAGNTSREAEALGEGNGPPRDVRNEELAK). Asparagine 27 carries an N-linked (GlcNAc...) asparagine glycan. A helical transmembrane segment spans residues 53–76 (LEIAVLAVTFAVAVLGNSSVLLAL). The Cytoplasmic segment spans residues 77–88 (HRTPRKTSRMHL). Residues 89 to 110 (FIRHLSLADLAVAFFQVLPQMC) form a helical membrane-spanning segment. Topologically, residues 111–125 (WDITYRFRGPDWLCR) are extracellular. Cysteine 124 and cysteine 203 are oxidised to a cystine. The helical transmembrane segment at 126–147 (VVKHLQVFGMFASAYMLVVMTA) threads the bilayer. The Cytoplasmic portion of the chain corresponds to 148–168 (DRYIAVCHPLKTLQQPARRSR). Residues 169–190 (LMIAAAWVLSFVLSTPQYFVFS) traverse the membrane as a helical segment. Residues 191–218 (MIEVNNVTKARDCWATFIQPWGSRAYVT) are Extracellular-facing. Residue asparagine 196 is glycosylated (N-linked (GlcNAc...) asparagine). The helical transmembrane segment at 219–239 (WMTGGIFVAPVVILGTCYGFI) threads the bilayer. Over 240 to 293 (CYNIWCNVRGKTASRQSKGAEQAGVAFQKGFLLAPCVSSVKSISRAKIRTVKMT) the chain is Cytoplasmic. A helical transmembrane segment spans residues 294 to 313 (FVIVTAYIVCWAPFFIIQMW). Topologically, residues 314 to 331 (SVWDPMSVWTESENPTIT) are extracellular. Residues 332 to 351 (ITALLGSLNSCCNPWIYMFF) traverse the membrane as a helical segment. The Cytoplasmic segment spans residues 352 to 418 (SGHLLQDCVQ…KSIKFIPVST (67 aa)). Residues cysteine 365 and cysteine 366 are each lipidated (S-palmitoyl cysteine). The disordered stretch occupies residues 377-410 (DTDSMSRRQTFYSNNRSPTNSTGMWKDSPKSSKS). The segment covering 383–399 (RRQTFYSNNRSPTNSTG) has biased composition (polar residues). The residue at position 404 (serine 404) is a Phosphoserine.

The protein belongs to the G-protein coupled receptor 1 family. Vasopressin/oxytocin receptor subfamily.

It localises to the cell membrane. Receptor for arginine vasopressin. The activity of this receptor is mediated by G proteins which activate a phosphatidyl-inositol-calcium second messenger system. Has been involved in social behaviors, including affiliation and attachment. This is Vasopressin V1a receptor (AVPR1A) from Homo sapiens (Human).